A 529-amino-acid polypeptide reads, in one-letter code: Polygalacturonase (529 aa).

An N-terminal signal peptide occupies residues methionine 1–alanine 21. The Proton donor role is filled by aspartate 305. The active site involves histidine 331. The segment at alanine 516–isoleucine 529 is required for PGA export across the outer membrane and catalytic activity.

Belongs to the glycosyl hydrolase 28 family. As to quaternary structure, monomer.

Its subcellular location is the secreted. It catalyses the reaction (1,4-alpha-D-galacturonosyl)n+m + H2O = (1,4-alpha-D-galacturonosyl)n + (1,4-alpha-D-galacturonosyl)m.. Functionally, contributes to the wilt disease production on tomato. This is Polygalacturonase (pglA) from Ralstonia solanacearum (Pseudomonas solanacearum).